The primary structure comprises 295 residues: Mitochondrial dicarboxylate transporter (295 aa).

Solcar repeat units lie at residues Lys4–His88, Thr96–Phe188, and Lys198–Tyr286. Helical transmembrane passes span Tyr8–Thr24, Gly63–Tyr82, Met98–Ile122, Gly163–Tyr182, Leu204–Ile224, and Trp262–Met280.

This sequence belongs to the mitochondrial carrier (TC 2.A.29) family. Homodimer.

It is found in the mitochondrion inner membrane. Functionally, mitochondrial dicarboxylic transporter catalyzing the exchange of dicarboxylic acids like malate and succinate for inorganic phosphate. Required for growth on ethanol and acetate. This Candida glabrata (strain ATCC 2001 / BCRC 20586 / JCM 3761 / NBRC 0622 / NRRL Y-65 / CBS 138) (Yeast) protein is Mitochondrial dicarboxylate transporter (DIC1).